The following is a 665-amino-acid chain: Cyclic nucleotide-gated cation channel subunit A (665 aa).

The Cytoplasmic portion of the chain corresponds to 1-110; the sequence is MRHFKVKAMV…DPTLQSHYRW (110 aa). Residues 111–131 form a helical membrane-spanning segment; it reads LAIVSLAVLYNIIFVVGRAVF. Over 132 to 138 the chain is Extracellular; sequence WEINKSA. N-linked (GlcNAc...) asparagine glycosylation is present at N135. A helical transmembrane segment spans residues 139-159; the sequence is PAFWYTLDYLCDFIYLLDTLV. Residues 160–186 lie on the Cytoplasmic side of the membrane; the sequence is HMHEGFLDQGLLVRDAFRLRRHYFHTK. A helical membrane pass occupies residues 187 to 207; it reads GWYLDVLSMLPTDLAYIWWPP. Topologically, residues 208–253 are extracellular; it reads ETCSSLYLPCPVIVRLNRLLRINRLWEWFDRTETATGYPNAFRICK. The chain crosses the membrane as a helical span at residues 254 to 274; the sequence is VVLAILVLIHWNACMYFAISY. At 275-325 the chain is on the cytoplasmic side; that stretch reads EIGFSSDSWVYNLNGTRNNTLQRQYIYSFYWSTLTLTTIGETPTPENDVEY. A helical membrane pass occupies residues 326–346; the sequence is LFVVADFLAGVLIFATIVGNI. Over 347 to 481 the chain is Extracellular; sequence GSMISNMNVA…GKLSVVGDDG (135 aa). 3',5'-cyclic GMP is bound by residues 437 to 559, E496, and R511; that span reads LLEA…DGLL. A helical transmembrane segment spans residues 482-502; it reads ITVLATLGAGSVFGEVSVLEI. At 503-665 the chain is on the cytoplasmic side; that stretch reads AGNRTGNRRT…SSDAAKQNTL (163 aa). The segment at 633-665 is disordered; sequence RSGRLYSLQPKRRPRSRPDATAKSSDAAKQNTL. Polar residues predominate over residues 654–665; that stretch reads AKSSDAAKQNTL.

It belongs to the cyclic nucleotide-gated cation channel (TC 1.A.1.5) family. Expressed in antennae and the visual system.

It localises to the membrane. Its function is as follows. Approximately 50-fold more sensitive to cGMP than to cAMP. May be involved in transduction cascades of both invertebrate photoreceptors and olfactory sensillae. This Drosophila melanogaster (Fruit fly) protein is Cyclic nucleotide-gated cation channel subunit A (CngA).